Reading from the N-terminus, the 250-residue chain is Hydroxyacylglutathione hydrolase (250 aa).

Zn(2+) is bound by residues His-53, His-55, Asp-57, His-58, His-110, Asp-127, and His-165.

It belongs to the metallo-beta-lactamase superfamily. Glyoxalase II family. As to quaternary structure, monomer. Requires Zn(2+) as cofactor.

It catalyses the reaction an S-(2-hydroxyacyl)glutathione + H2O = a 2-hydroxy carboxylate + glutathione + H(+). It functions in the pathway secondary metabolite metabolism; methylglyoxal degradation; (R)-lactate from methylglyoxal: step 2/2. Functionally, thiolesterase that catalyzes the hydrolysis of S-D-lactoyl-glutathione to form glutathione and D-lactic acid. The protein is Hydroxyacylglutathione hydrolase of Photorhabdus laumondii subsp. laumondii (strain DSM 15139 / CIP 105565 / TT01) (Photorhabdus luminescens subsp. laumondii).